The following is a 366-amino-acid chain: tRNA(Met) cytidine acetate ligase (366 aa).

ATP is bound by residues 7–20 (IAEF…HQYL), Gly101, Asn145, and Arg170.

This sequence belongs to the TmcAL family.

It is found in the cytoplasm. The catalysed reaction is cytidine(34) in elongator tRNA(Met) + acetate + ATP = N(4)-acetylcytidine(34) in elongator tRNA(Met) + AMP + diphosphate. Functionally, catalyzes the formation of N(4)-acetylcytidine (ac(4)C) at the wobble position of elongator tRNA(Met), using acetate and ATP as substrates. First activates an acetate ion to form acetyladenylate (Ac-AMP) and then transfers the acetyl group to tRNA to form ac(4)C34. The chain is tRNA(Met) cytidine acetate ligase from Pediococcus pentosaceus (strain ATCC 25745 / CCUG 21536 / LMG 10740 / 183-1w).